The sequence spans 250 residues: 23S rRNA (guanosine-2'-O-)-methyltransferase RlmB (250 aa).

3 residues coordinate S-adenosyl-L-methionine: glycine 197, isoleucine 217, and methionine 226.

The protein belongs to the class IV-like SAM-binding methyltransferase superfamily. RNA methyltransferase TrmH family. RlmB subfamily.

The protein localises to the cytoplasm. The catalysed reaction is guanosine(2251) in 23S rRNA + S-adenosyl-L-methionine = 2'-O-methylguanosine(2251) in 23S rRNA + S-adenosyl-L-homocysteine + H(+). Specifically methylates the ribose of guanosine 2251 in 23S rRNA. The protein is 23S rRNA (guanosine-2'-O-)-methyltransferase RlmB of Neisseria meningitidis serogroup B (strain ATCC BAA-335 / MC58).